We begin with the raw amino-acid sequence, 356 residues long: NADH dehydrogenase (ubiquinone) complex I, assembly factor 6 homolog (356 aa).

The transit peptide at 1 to 41 (MIRNSGRILFNSLKNSNVKLINRNVIINSNIRLFSTSTNNT) directs the protein to the mitochondrion.

The protein belongs to the NDUFAF6 family.

The protein resides in the mitochondrion inner membrane. Involved in the assembly of mitochondrial NADH:ubiquinone oxidoreductase complex (complex I) at early stages. The sequence is that of NADH dehydrogenase (ubiquinone) complex I, assembly factor 6 homolog from Dictyostelium discoideum (Social amoeba).